The sequence spans 359 residues: 3-dehydroquinate synthase (359 aa).

NAD(+)-binding positions include 71 to 76 (DGEAYK), 105 to 109 (GVIGD), 129 to 130 (TT), Lys-142, and Lys-151. Residues Glu-184, His-247, and His-264 each coordinate Zn(2+).

This sequence belongs to the sugar phosphate cyclases superfamily. Dehydroquinate synthase family. Co(2+) is required as a cofactor. Zn(2+) serves as cofactor. Requires NAD(+) as cofactor.

It is found in the cytoplasm. It catalyses the reaction 7-phospho-2-dehydro-3-deoxy-D-arabino-heptonate = 3-dehydroquinate + phosphate. The protein operates within metabolic intermediate biosynthesis; chorismate biosynthesis; chorismate from D-erythrose 4-phosphate and phosphoenolpyruvate: step 2/7. In terms of biological role, catalyzes the conversion of 3-deoxy-D-arabino-heptulosonate 7-phosphate (DAHP) to dehydroquinate (DHQ). The protein is 3-dehydroquinate synthase of Burkholderia mallei (strain NCTC 10247).